Consider the following 253-residue polypeptide: Proteasome subunit alpha (253 aa).

The span at 232–242 (AAGASTAGEAG) shows a compositional bias: low complexity. The tract at residues 232-253 (AAGASTAGEAGSAEDEGSDDEK) is disordered. Positions 243 to 253 (SAEDEGSDDEK) are enriched in acidic residues.

The protein belongs to the peptidase T1A family. The 20S proteasome core is composed of 14 alpha and 14 beta subunits that assemble into four stacked heptameric rings, resulting in a barrel-shaped structure. The two inner rings, each composed of seven catalytic beta subunits, are sandwiched by two outer rings, each composed of seven alpha subunits. The catalytic chamber with the active sites is on the inside of the barrel. Has a gated structure, the ends of the cylinder being occluded by the N-termini of the alpha-subunits. Is capped by the proteasome-associated ATPase, ARC.

Its subcellular location is the cytoplasm. It participates in protein degradation; proteasomal Pup-dependent pathway. Its activity is regulated as follows. The formation of the proteasomal ATPase ARC-20S proteasome complex, likely via the docking of the C-termini of ARC into the intersubunit pockets in the alpha-rings, may trigger opening of the gate for substrate entry. Interconversion between the open-gate and close-gate conformations leads to a dynamic regulation of the 20S proteasome proteolysis activity. Functionally, component of the proteasome core, a large protease complex with broad specificity involved in protein degradation. The polypeptide is Proteasome subunit alpha (Streptomyces avermitilis (strain ATCC 31267 / DSM 46492 / JCM 5070 / NBRC 14893 / NCIMB 12804 / NRRL 8165 / MA-4680)).